Here is a 444-residue protein sequence, read N- to C-terminus: MIETSQTIPELVSWAKDREFSLNLPTERLVFLLAIAIYNNERLDGEMLEADLVDIFRHTMNAFEQSTDAIATRANNAINELVKQRLLNRFSSEFTEGLAIYRLTPLGVGVSDYYIRQREFSALRLSVQLSIVADEIQRASDSAEEGVENNESEHYWRRNVFAPLKYSVAEIFDSIDLSQRIMDENQQSIKDEIAELLTKDWQAAISSCERLLDETSGNLRELQDTLNAAGDKLQAQLLRIQDCVIGRDDLYFIDQLITDLQSKLDRIISWGQQAIDLWIGYDRHVHKFIRTAIDMDKNRVFSQRLRNSIHNYFEHPWFLWTAQAERLVDLRDEEMVLREDDALGELPEELQYESLSDLHDQIVEHMQDLLIAYRENNRPIDLSLVLKEQLENYPLSRHFDVARIIVDQAVRLGMANDDLSGIYPDWQVINKRGAEVQAHVIDKY.

Residues 212 to 240 (LDETSGNLRELQDTLNAAGDKLQAQLLRI) form a leucine-zipper region.

The protein belongs to the MukF family. In terms of assembly, interacts, and probably forms a ternary complex, with MukE and MukB via its C-terminal region. The complex formation is stimulated by calcium or magnesium. It is required for an interaction between MukE and MukB.

It localises to the cytoplasm. The protein resides in the nucleoid. Functionally, involved in chromosome condensation, segregation and cell cycle progression. May participate in facilitating chromosome segregation by condensation DNA from both sides of a centrally located replisome during cell division. Not required for mini-F plasmid partitioning. Probably acts via its interaction with MukB and MukE. Overexpression results in anucleate cells. It has a calcium binding activity. This chain is Chromosome partition protein MukF, found in Haemophilus influenzae (strain PittEE).